Consider the following 149-residue polypeptide: Transcriptional regulator MraZ (149 aa).

SpoVT-AbrB domains lie at 7 to 54 (KYVN…GISH) and 83 to 126 (AVQL…QPQN).

Belongs to the MraZ family. In terms of assembly, forms oligomers.

The protein resides in the cytoplasm. The protein localises to the nucleoid. The sequence is that of Transcriptional regulator MraZ from Rickettsia conorii (strain ATCC VR-613 / Malish 7).